The following is a 20-amino-acid chain: Unknown protein NF003 from 2D-PAGE (20 aa).

The polypeptide is Unknown protein NF003 from 2D-PAGE (Naegleria fowleri (Brain eating amoeba)).